Consider the following 274-residue polypeptide: E3 ubiquitin-protein ligase complex SLX5-SLX8 subunit SLX8 (274 aa).

Disordered stretches follow at residues 1-117 (MARR…GNNI) and 136-159 (ANTP…TNSK). The segment covering 13 to 28 (ENLRIKRVRLESVRQN) has biased composition (basic and acidic residues). At Ser50 the chain carries Phosphoserine. A Phosphothreonine modification is found at Thr66. Acidic residues predominate over residues 66–75 (TSEEDGDDDL). Ser67 is subject to Phosphoserine. Residues 97–108 (GNHDRETMHTEE) show a composition bias toward basic and acidic residues. The RING-type zinc-finger motif lies at 206-250 (CPICFEPPETALMTLCGHVFCCPCLFQMVNSSRTCRQFGHCALCR).

As to quaternary structure, component of the heterodimeric SUMO-targeted ubiquitin ligase (STUbL) complex composed of SLX5 and SLX8.

It localises to the nucleus. Its subcellular location is the chromosome. The protein resides in the centromere. It is found in the kinetochore. It carries out the reaction S-ubiquitinyl-[E2 ubiquitin-conjugating enzyme]-L-cysteine + [acceptor protein]-L-lysine = [E2 ubiquitin-conjugating enzyme]-L-cysteine + N(6)-ubiquitinyl-[acceptor protein]-L-lysine.. Its pathway is protein modification; protein ubiquitination. Component of the SUMO-targeted ubiquitin ligase (STUbL) complex SLX5/SLX8 that mediates ubiquitination and subsequent desumoylation of sumoylated proteins and proteins containing SUMO-like domains for their degradation. The STUbL complex SLX5/SLX8 stimulates ubiquitin conjugating enzymes, including UBC1, UBC4, UBC5 and UBC13-MMS2, and mediates the proteolytic down-regulation of sumoylated proteins. The STUbL complex SLX5/SLX8 is involved in ubiquitin-mediated degradation of histone variant CSE4, preventing mislocalization to euchromatin. The complex plays an essential role in maintenance of chromosome stability and links SUMO-dependent ubiquitination to a centromere-specific function during mitosis. The complex is involved in proteolysis of spindle positioning protein KAR9 and ensures correct spindle function by regulating levels of microtubule-associated proteins. During replication, the complex helps to prevent DNA lesions via recombination and has a role in localizing the DNA damage protein DCD2. The complex especially ubiquitinates the nuclease YEN1 and prevents persistent accumulation of a fraction of YEN1 associated with sites of activity in late G2/M and helps maintain the balance between pro- and anti-crossover pathways during homologous recombination. It is also involved in ubiquitin-mediated degradation of DNA repair proteins RAD52 and RAD57. Finally, the complex is recruited to distinct genomic hotspots of non-H2B protein ubiquitination (ub-hotspots) by the sumoylated transcription factor-like protein EUC1 where it ubiquitinates EUC1 and presumably other targets. This is E3 ubiquitin-protein ligase complex SLX5-SLX8 subunit SLX8 (SLX8) from Saccharomyces cerevisiae (strain ATCC 204508 / S288c) (Baker's yeast).